Reading from the N-terminus, the 350-residue chain is tRNA pseudouridine synthase D (350 aa).

Asp-85 acts as the Nucleophile in catalysis. Residues 160-310 (GVINYFGEQR…EAARRTILLR (151 aa)) enclose the TRUD domain.

Belongs to the pseudouridine synthase TruD family.

The catalysed reaction is uridine(13) in tRNA = pseudouridine(13) in tRNA. Responsible for synthesis of pseudouridine from uracil-13 in transfer RNAs. The protein is tRNA pseudouridine synthase D of Idiomarina loihiensis (strain ATCC BAA-735 / DSM 15497 / L2-TR).